Consider the following 119-residue polypeptide: MARSVVVALLVLLSLSGLEAIQHAPKIQVYSRHPAENGKPNFLNCYVSGFHPSDIEVDLLKNGKKIEKVEHSDLSFSKDWSFYLLYYTEFTPNEKDEYACRVSHVTFSTPKTVKWDRTM.

The signal sequence occupies residues 1-20 (MARSVVVALLVLLSLSGLEA). In terms of domain architecture, Ig-like C1-type spans 25 to 114 (PKIQVYSRHP…VTFSTPKTVK (90 aa)). A disulfide bridge connects residues Cys-45 and Cys-100.

This sequence belongs to the beta-2-microglobulin family. As to quaternary structure, heterodimer of an alpha chain and a beta chain. Beta-2-microglobulin is the beta-chain of major histocompatibility complex class I molecules.

It is found in the secreted. Component of the class I major histocompatibility complex (MHC). Involved in the presentation of peptide antigens to the immune system. The sequence is that of Beta-2-microglobulin (B2M) from Ateles paniscus (Black spider monkey).